Here is a 217-residue protein sequence, read N- to C-terminus: 7-cyano-7-deazaguanine synthase (217 aa).

An ATP-binding site is contributed by 10 to 20 (FSGGQDSTTCL). Residues Cys-185, Cys-194, Cys-197, and Cys-200 each contribute to the Zn(2+) site.

This sequence belongs to the QueC family. As to quaternary structure, homodimer. Requires Zn(2+) as cofactor.

It carries out the reaction 7-carboxy-7-deazaguanine + NH4(+) + ATP = 7-cyano-7-deazaguanine + ADP + phosphate + H2O + H(+). It functions in the pathway purine metabolism; 7-cyano-7-deazaguanine biosynthesis. Its function is as follows. Catalyzes the ATP-dependent conversion of 7-carboxy-7-deazaguanine (CDG) to 7-cyano-7-deazaguanine (preQ(0)). The protein is 7-cyano-7-deazaguanine synthase of Streptococcus mutans serotype c (strain ATCC 700610 / UA159).